The chain runs to 111 residues: UPF0060 membrane protein XCC2880 (111 aa).

4 helical membrane-spanning segments follow: residues 8-28, 34-54, 62-82, and 91-111; these read LLLF…PYLW, SVWL…LLTL, VYAA…WWVD, and LLGA…PRSG.

The protein belongs to the UPF0060 family.

It localises to the cell inner membrane. The chain is UPF0060 membrane protein XCC2880 from Xanthomonas campestris pv. campestris (strain ATCC 33913 / DSM 3586 / NCPPB 528 / LMG 568 / P 25).